Reading from the N-terminus, the 368-residue chain is Apolipoprotein A-V (368 aa).

The N-terminal stretch at 1–20 (MAAVITWALALLAVFASTQA) is a signal peptide. The residue at position 52 (Ser52) is a Phosphoserine. A coiled-coil region spans residues 231-255 (TRKAKDLHTSIQRNLDQLRDELSAF). A disordered region spans residues 305-333 (EEIQHQLAPPPPSHSAFAPELGHSDSNKA).

This sequence belongs to the apolipoprotein A1/A4/E family. Interacts with GPIHBP1. Interacts with SORL1; this interaction leads to APOA5 internalization and sorting either to lysosomes and degradation, or to the trans-Golgi network. Post-translationally, phosphorylated by FAM20C in the extracellular medium. As to expression, liver.

It localises to the secreted. It is found in the early endosome. Its subcellular location is the late endosome. The protein resides in the golgi apparatus. The protein localises to the trans-Golgi network. Functionally, minor apolipoprotein mainly associated with HDL and to a lesser extent with VLDL. May also be associated with chylomicrons. Important determinant of plasma triglyceride (TG) levels by both being a potent stimulator of apo-CII lipoprotein lipase (LPL) TG hydrolysis and an inhibitor of the hepatic VLDL-TG production rate (without affecting the VLDL-apoB production rate). Activates poorly lecithin:cholesterol acyltransferase (LCAT) and does not enhance efflux of cholesterol from macrophages. Binds heparin. This chain is Apolipoprotein A-V (Apoa5), found in Mus musculus (Mouse).